A 112-amino-acid chain; its full sequence is Type III inner-rod protein PscI (112 aa).

This sequence belongs to the YscI/HrpB family. In terms of assembly, homomultimer (through its C-terminal region).

Component of the type III secretion (T3S) injectisome that translocates effector toxins into host cells, facilitating the establishment and dissemination of infection. Polymerizes into flexible and regularly twisted fibrils and plays an essential role in needle assembly. This is Type III inner-rod protein PscI (pscI) from Pseudomonas aeruginosa (strain ATCC 15692 / DSM 22644 / CIP 104116 / JCM 14847 / LMG 12228 / 1C / PRS 101 / PAO1).